We begin with the raw amino-acid sequence, 562 residues long: Zinc finger protein 579 (562 aa).

A compositionally biased stretch (pro residues) spans 1-11; it reads MDPQPPPPAQG. Residues 1-45 form a disordered region; that stretch reads MDPQPPPPAQGSPPHRDRGRGRGRGRGRGRGRGRGRGGAGAPRAP. Residues 17 to 35 show a composition bias toward basic residues; sequence DRGRGRGRGRGRGRGRGRG. 3 C2H2-type zinc fingers span residues 46-68, 74-96, and 102-125; these read LPCPTCGRLFRFPYYLSRHRLSH, HACPLCPKAFRRPAHLSRHLRGH, and LRCAACPRTFPEPAQLRRHLAQEH. The residue at position 94 (Arg-94) is an Omega-N-methylarginine. 2 disordered regions span residues 120 to 154 and 166 to 199; these read HLAQEHAGSEVDLSTQRAVKEEPEASWGPQDEGVE and EEATTQWPAGDSAPAAVPTSTDPRESEAKEAEAG. Residues 187–197 are compositionally biased toward basic and acidic residues; sequence DPRESEAKEAE. Phosphoserine is present on Ser-191. 2 C2H2-type zinc fingers span residues 267–289 and 295–317; these read HQCSICLKAFARPWSLSRHRLVH and FVCPDCGLAFRLASYLRQHRRVH. The interval 321 to 377 is disordered; the sequence is SLLAPLPGAGKKDDKASGGRNSGKGPEGGEGAECGGASEGGEGGHNGGDATPARPPA. Over residues 340–367 the composition is skewed to gly residues; the sequence is RNSGKGPEGGEGAECGGASEGGEGGHNG. C2H2-type zinc fingers lie at residues 382 to 404, 410 to 432, and 439 to 461; these read FWCPECGKGFRRRAHLRQHGVTH, FQCVRCQREFKRLADLARHAQVH, and HPCPRCPRRFSRAYSLLRHQRCH. Ser-486 is modified (phosphoserine). The tract at residues 505–530 is disordered; that stretch reads AHIKEEPPSPGTPPQSPPAPPVFLSA. Positions 512 to 525 are enriched in pro residues; that stretch reads PSPGTPPQSPPAPP.

Belongs to the krueppel C2H2-type zinc-finger protein family.

Its subcellular location is the nucleus. In terms of biological role, may be involved in transcriptional regulation. The chain is Zinc finger protein 579 (Znf579) from Mus musculus (Mouse).